A 451-amino-acid chain; its full sequence is Bifunctional protein GlmU (451 aa).

The pyrophosphorylase stretch occupies residues 1–230 (MNNPIAAIVL…PADVGGINSR (230 aa)). Residues 10-13 (LAAG), K24, Q74, 79-80 (GT), 102-104 (YGD), G142, E156, N171, and N228 each bind UDP-N-acetyl-alpha-D-glucosamine. D104 provides a ligand contact to Mg(2+). A Mg(2+)-binding site is contributed by N228. The interval 231 to 251 (AELAAAEAQWQAFRREEAMAA) is linker. The tract at residues 252–451 (GASLRAPETV…RKKKAAEQKK (200 aa)) is N-acetyltransferase. UDP-N-acetyl-alpha-D-glucosamine is bound by residues R317 and K335. H347 serves as the catalytic Proton acceptor. Positions 350 and 361 each coordinate UDP-N-acetyl-alpha-D-glucosamine. Acetyl-CoA-binding positions include A364, 370–371 (NY), S389, A407, and R424.

This sequence in the N-terminal section; belongs to the N-acetylglucosamine-1-phosphate uridyltransferase family. The protein in the C-terminal section; belongs to the transferase hexapeptide repeat family. In terms of assembly, homotrimer. Mg(2+) is required as a cofactor.

The protein resides in the cytoplasm. The enzyme catalyses alpha-D-glucosamine 1-phosphate + acetyl-CoA = N-acetyl-alpha-D-glucosamine 1-phosphate + CoA + H(+). The catalysed reaction is N-acetyl-alpha-D-glucosamine 1-phosphate + UTP + H(+) = UDP-N-acetyl-alpha-D-glucosamine + diphosphate. Its pathway is nucleotide-sugar biosynthesis; UDP-N-acetyl-alpha-D-glucosamine biosynthesis; N-acetyl-alpha-D-glucosamine 1-phosphate from alpha-D-glucosamine 6-phosphate (route II): step 2/2. It functions in the pathway nucleotide-sugar biosynthesis; UDP-N-acetyl-alpha-D-glucosamine biosynthesis; UDP-N-acetyl-alpha-D-glucosamine from N-acetyl-alpha-D-glucosamine 1-phosphate: step 1/1. The protein operates within bacterial outer membrane biogenesis; LPS lipid A biosynthesis. Functionally, catalyzes the last two sequential reactions in the de novo biosynthetic pathway for UDP-N-acetylglucosamine (UDP-GlcNAc). The C-terminal domain catalyzes the transfer of acetyl group from acetyl coenzyme A to glucosamine-1-phosphate (GlcN-1-P) to produce N-acetylglucosamine-1-phosphate (GlcNAc-1-P), which is converted into UDP-GlcNAc by the transfer of uridine 5-monophosphate (from uridine 5-triphosphate), a reaction catalyzed by the N-terminal domain. The sequence is that of Bifunctional protein GlmU from Sphingopyxis alaskensis (strain DSM 13593 / LMG 18877 / RB2256) (Sphingomonas alaskensis).